Here is a 287-residue protein sequence, read N- to C-terminus: Lipoyl synthase (287 aa).

7 residues coordinate [4Fe-4S] cluster: cysteine 34, cysteine 39, cysteine 45, cysteine 60, cysteine 64, cysteine 67, and serine 273. Residues tryptophan 46–leucine 262 enclose the Radical SAM core domain.

This sequence belongs to the radical SAM superfamily. Lipoyl synthase family. It depends on [4Fe-4S] cluster as a cofactor.

The protein resides in the cytoplasm. It carries out the reaction [[Fe-S] cluster scaffold protein carrying a second [4Fe-4S](2+) cluster] + N(6)-octanoyl-L-lysyl-[protein] + 2 oxidized [2Fe-2S]-[ferredoxin] + 2 S-adenosyl-L-methionine + 4 H(+) = [[Fe-S] cluster scaffold protein] + N(6)-[(R)-dihydrolipoyl]-L-lysyl-[protein] + 4 Fe(3+) + 2 hydrogen sulfide + 2 5'-deoxyadenosine + 2 L-methionine + 2 reduced [2Fe-2S]-[ferredoxin]. It functions in the pathway protein modification; protein lipoylation via endogenous pathway; protein N(6)-(lipoyl)lysine from octanoyl-[acyl-carrier-protein]: step 2/2. Its function is as follows. Catalyzes the radical-mediated insertion of two sulfur atoms into the C-6 and C-8 positions of the octanoyl moiety bound to the lipoyl domains of lipoate-dependent enzymes, thereby converting the octanoylated domains into lipoylated derivatives. This chain is Lipoyl synthase, found in Wolbachia sp. subsp. Drosophila simulans (strain wRi).